A 125-amino-acid chain; its full sequence is MRGTRLALLALVLAACGELAPALRCYVCPEPTGVSDCVTIATCTTNETMCKTTLYSREIVYPFQGDSTVTKSCASKCKPSDVDGIGQTLPVSCCNTELCNVDGAPALNSLHCGALTLLPLLSLRL.

Positions 1–22 (MRGTRLALLALVLAACGELAPA) are cleaved as a signal peptide. The UPAR/Ly6 domain maps to 25-100 (CYVCPEPTGV…VSCCNTELCN (76 aa)). Residue N46 is glycosylated (N-linked (GlcNAc...) asparagine). G103 carries GPI-anchor amidated glycine lipidation. Residues 104–125 (APALNSLHCGALTLLPLLSLRL) constitute a propeptide, removed in mature form.

It localises to the cell membrane. The protein is Ly6/PLAUR domain-containing protein 2 (LYPD2) of Homo sapiens (Human).